We begin with the raw amino-acid sequence, 828 residues long: Periplasmic nitrate reductase (828 aa).

The tat-type signal signal peptide spans 1–31 (MKLSRRSFMKANAVAAAAAAAGLSVPGVARA). Residues 39–95 (IKWDKAPCRFCGTGCGVLVGTQQGRVVACQGDPDAPVNRGLNCIKGYFLPKIMYGKD) form the 4Fe-4S Mo/W bis-MGD-type domain. [4Fe-4S] cluster-binding residues include Cys-46, Cys-49, Cys-53, and Cys-81. Mo-bis(molybdopterin guanine dinucleotide) contacts are provided by residues Lys-83, Gln-150, Asn-175, Cys-179, 212 to 219 (WGANMAEM), 243 to 247 (STYQH), 262 to 264 (QSD), Met-372, Gln-376, Asn-482, 508 to 509 (SD), Lys-531, Asp-558, and 718 to 727 (TGRVLEHWHT). Residue Phe-794 coordinates substrate. Asn-802 and Lys-819 together coordinate Mo-bis(molybdopterin guanine dinucleotide).

This sequence belongs to the prokaryotic molybdopterin-containing oxidoreductase family. NasA/NapA/NarB subfamily. Component of the periplasmic nitrate reductase NapAB complex composed of NapA and NapB. [4Fe-4S] cluster is required as a cofactor. The cofactor is Mo-bis(molybdopterin guanine dinucleotide). Post-translationally, predicted to be exported by the Tat system. The position of the signal peptide cleavage has not been experimentally proven.

It localises to the periplasm. The catalysed reaction is 2 Fe(II)-[cytochrome] + nitrate + 2 H(+) = 2 Fe(III)-[cytochrome] + nitrite + H2O. In terms of biological role, catalytic subunit of the periplasmic nitrate reductase complex NapAB. Receives electrons from NapB and catalyzes the reduction of nitrate to nitrite. The protein is Periplasmic nitrate reductase of Escherichia coli O6:K15:H31 (strain 536 / UPEC).